The sequence spans 354 residues: Protein-arginine kinase (354 aa).

In terms of domain architecture, Phosphagen kinase C-terminal spans 24–254 (IVLSSRIRLA…QQIIQQEKMA (231 aa)). Residues 27 to 31 (SSRIR), histidine 92, arginine 125, 176 to 180 (RASVM), and 207 to 212 (RGIYGE) contribute to the ATP site. An RDXXRA motif of the pArg binding pocket involved in allosteric regulation motif is present at residues 337–342 (RDYRRA).

The protein belongs to the ATP:guanido phosphotransferase family.

The enzyme catalyses L-arginyl-[protein] + ATP = N(omega)-phospho-L-arginyl-[protein] + ADP + H(+). With respect to regulation, appears to be allosterically activated by the binding of pArg-containing polypeptides to the pArg-binding pocket localized in the C-terminal domain of McsB. Its function is as follows. Catalyzes the specific phosphorylation of arginine residues in a large number of proteins. Is part of the bacterial stress response system. Protein arginine phosphorylation has a physiologically important role and is involved in the regulation of many critical cellular processes, such as protein homeostasis, motility, competence, and stringent and stress responses, by regulating gene expression and protein activity. The chain is Protein-arginine kinase from Bacillus anthracis (strain A0248).